Reading from the N-terminus, the 688-residue chain is Probable glucan endo-1,3-beta-glucosidase btgC (688 aa).

3 disordered regions span residues M1–Q49, D61–P91, and Q169–Y194. The Cytoplasmic segment spans residues M1–R307. Residues S175–N188 show a composition bias toward polar residues. The chain crosses the membrane as a helical; Signal-anchor for type II membrane protein span at residues G308–V328. At G329–T688 the chain is on the extracellular side. A disordered region spans residues H334 to D363. Residues S341–T355 show a composition bias toward low complexity. Residues N408, N431, and N459 are each glycosylated (N-linked (GlcNAc...) asparagine). The active-site Proton donor is E491. E590 serves as the catalytic Nucleophile. 2 N-linked (GlcNAc...) asparagine glycosylation sites follow: N609 and N635.

It belongs to the glycosyl hydrolase 17 family.

The protein resides in the cell membrane. It catalyses the reaction Hydrolysis of (1-&gt;3)-beta-D-glucosidic linkages in (1-&gt;3)-beta-D-glucans.. Glucanases play a role in cell expansion during growth, in cell-cell fusion during mating, and in spore release during sporulation. This enzyme may be involved in beta-glucan degradation. Active on laminarin and lichenan. In Aspergillus fumigatus (strain CBS 144.89 / FGSC A1163 / CEA10) (Neosartorya fumigata), this protein is Probable glucan endo-1,3-beta-glucosidase btgC (btgC).